The primary structure comprises 268 residues: 5'-nucleotidase SurE (268 aa).

The a divalent metal cation site is built by Asp8, Asp9, Ser40, and Asn98.

Belongs to the SurE nucleotidase family. The cofactor is a divalent metal cation.

The protein resides in the cytoplasm. The catalysed reaction is a ribonucleoside 5'-phosphate + H2O = a ribonucleoside + phosphate. Its function is as follows. Nucleotidase that shows phosphatase activity on nucleoside 5'-monophosphates. The protein is 5'-nucleotidase SurE of Trichodesmium erythraeum (strain IMS101).